The chain runs to 551 residues: Cysteine desulfurase SufS (551 aa).

The N-terminal stretch at 1–22 (MRPSSAAWICLLLRIANYTCYS) is a signal peptide. Lysine 327 is subject to N6-(pyridoxal phosphate)lysine. Cysteine 500 serves as the catalytic Cysteine persulfide intermediate.

It belongs to the class-V pyridoxal-phosphate-dependent aminotransferase family. Csd subfamily. In terms of assembly, monomer. Interacts with SufE; interaction enhances cysteine desulfurase activity of SufS. Pyridoxal 5'-phosphate serves as cofactor.

The protein resides in the plastid. It is found in the apicoplast. The catalysed reaction is (sulfur carrier)-H + L-cysteine = (sulfur carrier)-SH + L-alanine. Its pathway is cofactor biosynthesis; iron-sulfur cluster biosynthesis. Catalyzes sulfur activation and mobilization in sulfur mobilization (SUF) pathway for iron-sulfur (Fe-S) cluster biogenesis. Active when in complex with a partner protein SufE. Required for apicoplast maintenance. Plays a role in the development of sporozoites in oocysts in mosquitoes. This Plasmodium vivax protein is Cysteine desulfurase SufS.